Reading from the N-terminus, the 129-residue chain is Trefoil factor 2 (129 aa).

The signal sequence occupies residues 1-23 (MGPRGAPLLAVVLVLGLHALVEG). P-type domains lie at 29–73 (CRCS…FHPL) and 79–122 (EQCV…FFPQ). Intrachain disulfides connect Cys-29-Cys-127, Cys-31-Cys-58, Cys-42-Cys-57, Cys-52-Cys-69, Cys-81-Cys-107, Cys-91-Cys-106, and Cys-101-Cys-118.

In terms of tissue distribution, stomach and pancreas.

Its subcellular location is the secreted. Functionally, inhibits gastrointestinal motility and gastric acid secretion. Could function as a structural component of gastric mucus, possibly by stabilizing glycoproteins in the mucus gel through interactions with carbohydrate side chains. The sequence is that of Trefoil factor 2 (Tff2) from Mus musculus (Mouse).